The sequence spans 567 residues: MASAALICGTEQWKALQAHVGAIQKTHLRDLMADADRCKAMTAEYEGIFLDYSRQQATGETMEKLLKLADAAKLKEKIEKMFKGEKINSTENRSVLHVALRAPRDAVINSDGVNVVPEVWSVKDKIKQFSETFRSGSWVGATGKPLTNVVSVGIGGSFLGPLFVHTALQTDPEAAECAKGRQLRFLANVDPVDVARSIKDLDPETTLVVVVSKTFTTAETMLNARTLKEWIVSSLGPQAVAKHMIAVSTNLKLVKEFGIDPNNAFAFWDWVGGRYSVCSAVGVLPLSLQYGFPIVQKFLEGASSIDNHFYSSSFEKNIPVLLGLLSVWNVSFLGYPARAILPYSQALEKLAPHIQQLSMESNGKGVSIDGAQLSFETGEIDFGEPGTNGQHSFYQLIHQGRVIPCDFIGVVKSQQPVYLKGETVSNHDELMSNFFAQPDALAYGKTPEQLHSEKVPENLIPHKTFKGNRPSLSLLLPTLSAYEVGQLLSIYEHRIAVQGFIWGINSFDQWGVELGKSLASQVRKQLHGTRMEGKPVEGFNHSTSSLLARYLAVKPSTPYDTTVLPKV.

The active-site Proton donor is Glu360. Catalysis depends on residues His391 and Lys516.

Belongs to the GPI family. Homodimer.

The protein localises to the cytoplasm. It carries out the reaction alpha-D-glucose 6-phosphate = beta-D-fructose 6-phosphate. It participates in carbohydrate degradation; glycolysis; D-glyceraldehyde 3-phosphate and glycerone phosphate from D-glucose: step 2/4. This is Glucose-6-phosphate isomerase, cytosolic (PHI1) from Zea mays (Maize).